A 1091-amino-acid chain; its full sequence is Neural cell adhesion molecule 1 (1091 aa).

The signal sequence occupies residues 1 to 19; that stretch reads MLPAAALPWTLFFLGAAAS. Ig-like C2-type domains follow at residues 20-113, 116-205, 212-301, 308-403, and 406-495; these read LQVD…VNVK, QKLM…KDIQ, PSVR…ATIH, PKIT…LEVQ, and PKLQ…FILV. Residues 20 to 711 lie on the Extracellular side of the membrane; that stretch reads LQVDIVPSQG…STSPTSGLGT (692 aa). Cystine bridges form between Cys41-Cys96 and Cys139-Cys189. Heparin contacts are provided by residues 152–156 and 161–165; these read KHKGR and KKDVR. Asn222 is a glycosylation site (N-linked (GlcNAc...) asparagine). Cys235 and Cys287 are disulfide-bonded. N-linked (GlcNAc...) asparagine glycans are attached at residues Asn315, Asn347, Asn423, Asn449, and Asn478. An intrachain disulfide couples Cys329 to Cys385. The cysteines at positions 426 and 479 are disulfide-linked. Fibronectin type-III domains lie at 499 to 598 and 600 to 696; these read TPSS…TQPV and EPSA…SAQP. The chain crosses the membrane as a helical span at residues 712-729; that stretch reads AAIVGILIVIFVLLLVAV. Topologically, residues 730 to 1091 are cytoplasmic; that stretch reads DVTCYFLNKC…ATEIRHLQQK (362 aa). 4 disordered regions span residues 756 to 809, 840 to 916, 937 to 1023, and 1041 to 1091; these read GAKG…TEPE, ATAQ…NNLS, ETSK…GTFK, and TPAS…LQQK. A compositionally biased stretch (basic and acidic residues) spans 758-799; the sequence is KGKDMEEGKAAFSKDESKEPIVEVRTEEERTPNHDGGKHTEP. A compositionally biased stretch (low complexity) spans 845–856; the sequence is SPTSETTTLTSS. Polar residues-rich tracts occupy residues 904–916 and 980–1012; these read DTPSSAPATNNLS and QPSTVKSPTETAKNPSNPKSEAASGGTTNPSQN. Basic and acidic residues-rich tracts occupy residues 1013–1023 and 1068–1091; these read EDFKMDEGTFK and KTEKTPVEDKSEVQATEIRHLQQK.

In terms of processing, polysialylated by ST8SIA2 and ST8SIA4. Polysialylation modulates cell interactions by confering both attractive and repulsive properties that are highly regulated by ST8SIA2 and ST8SIA4. Polysialylation is formed on a-2,3-linked sialic acid of core glycans.

It localises to the cell membrane. Its function is as follows. This protein is a cell adhesion molecule involved in neuron-neuron adhesion, neurite fasciculation, outgrowth of neurites, etc. The polypeptide is Neural cell adhesion molecule 1 (Gallus gallus (Chicken)).